The primary structure comprises 235 residues: Non-structural maintenance of chromosomes element 1 homolog (235 aa).

The RING-type; atypical zinc finger occupies 181–225; the sequence is IKNCTLCKCLVLWDIRCGSCNIQYHRGCIQTYLQRRDICPSCGNL. Phosphothreonine is present on threonine 185.

This sequence belongs to the NSE1 family. Component of the Smc5-Smc6 complex which consists at least of Smc5, Smc6, Nse1, Nse2, Nse4 and MAGE. Nse1, Nse4 and MAGE probably form a subcomplex that bridges the head domains of the Smc5-Smc6 heterodimer. Interacts with MAGE and Nse4.

Its subcellular location is the nucleus. It catalyses the reaction S-ubiquitinyl-[E2 ubiquitin-conjugating enzyme]-L-cysteine + [acceptor protein]-L-lysine = [E2 ubiquitin-conjugating enzyme]-L-cysteine + N(6)-ubiquitinyl-[acceptor protein]-L-lysine.. In terms of biological role, component of the SMC5-SMC6 complex, a complex involved in repair of DNA double-strand breaks by homologous recombination. The complex may promote sister chromatid homologous recombination by recruiting the SMC1-SMC3 cohesin complex to double-strand breaks. The protein is Non-structural maintenance of chromosomes element 1 homolog of Drosophila melanogaster (Fruit fly).